The sequence spans 242 residues: MSQITMRQMIEAGVHFGHQTRFWNPKMAQYIFGARNKIHIVNLEKTLPMFQDAQEAVRRLVANKGTVLFVGTKRQARDIIREEATRAGMPFVDYRWLGGMLTNYKTVKQSIKRLEEKTAALENAAESGFSKKEILEMQRDVEKLERSLGGIKNMKGLPDAIFVIDTGYQKGTLVEAEKLGIPVIAVVDTNNSPDGVKYVIPGNDDSAKAIRLYCRGIADAVLEGKNQALQETVAAAQEAAAE.

Belongs to the universal ribosomal protein uS2 family.

This Neisseria meningitidis serogroup B (strain ATCC BAA-335 / MC58) protein is Small ribosomal subunit protein uS2.